Reading from the N-terminus, the 427-residue chain is UDP-N-acetylglucosamine 1-carboxyvinyltransferase (427 aa).

Lys22–Asn23 is a binding site for phosphoenolpyruvate. UDP-N-acetyl-alpha-D-glucosamine is bound at residue Arg92. Asp116 functions as the Proton donor in the catalytic mechanism. Asp312 and Met334 together coordinate UDP-N-acetyl-alpha-D-glucosamine.

This sequence belongs to the EPSP synthase family. MurA subfamily.

It localises to the cytoplasm. The catalysed reaction is phosphoenolpyruvate + UDP-N-acetyl-alpha-D-glucosamine = UDP-N-acetyl-3-O-(1-carboxyvinyl)-alpha-D-glucosamine + phosphate. Its pathway is cell wall biogenesis; peptidoglycan biosynthesis. In terms of biological role, cell wall formation. Adds enolpyruvyl to UDP-N-acetylglucosamine. This is UDP-N-acetylglucosamine 1-carboxyvinyltransferase from Borreliella burgdorferi (strain ATCC 35210 / DSM 4680 / CIP 102532 / B31) (Borrelia burgdorferi).